Here is a 176-residue protein sequence, read N- to C-terminus: Large ribosomal subunit protein uL15 (176 aa).

Residues 1 to 13 (MKLNDLRDNEGAR) show a composition bias toward basic and acidic residues. Disordered regions lie at residues 1-48 (MKLN…AIKG) and 151-176 (IPAA…AKAE). The segment covering 21 to 35 (RGIGSGKGKTGGRGQ) has biased composition (gly residues). Over residues 156–176 (PEHEKKAARSEANKKAKAKAE) the composition is skewed to basic and acidic residues.

The protein belongs to the universal ribosomal protein uL15 family. Part of the 50S ribosomal subunit.

Functionally, binds to the 23S rRNA. This is Large ribosomal subunit protein uL15 from Erythrobacter litoralis (strain HTCC2594).